The primary structure comprises 285 residues: N(G),N(G)-dimethylarginine dimethylaminohydrolase 1 (285 aa).

Ala-2 bears the N-acetylalanine mark. Leu-30 contacts substrate. Ser-33 carries the phosphoserine modification. Substrate contacts are provided by Asp-73, Glu-78, Asp-79, Arg-98, and Arg-145. The Proton donor role is filled by His-173. Position 222 is an S-nitrosocysteine (Cys-222). Position 268 (Val-268) interacts with substrate. Residue Cys-274 is modified to S-nitrosocysteine. Cys-274 serves as the catalytic Nucleophile. Residue Cys-274 participates in Zn(2+) binding.

It belongs to the DDAH family. Monomer. In terms of tissue distribution, detected in skeletal muscle, lung, heart, liver, kidney and brain (at protein level).

It carries out the reaction N(omega),N(omega)-dimethyl-L-arginine + H2O = dimethylamine + L-citrulline. The catalysed reaction is N(omega)-methyl-L-arginine + H2O = L-citrulline + methylamine. Its activity is regulated as follows. Inhibited by zinc ions. In terms of biological role, hydrolyzes N(G),N(G)-dimethyl-L-arginine (ADMA) and N(G)-monomethyl-L-arginine (MMA) which act as inhibitors of NOS. Has therefore a role in the regulation of nitric oxide generation. This Mus musculus (Mouse) protein is N(G),N(G)-dimethylarginine dimethylaminohydrolase 1 (Ddah1).